Here is a 547-residue protein sequence, read N- to C-terminus: uncharacterized protein (547 aa).

Over residues 38–50 (RNLPFHREREKVE) the composition is skewed to basic and acidic residues. The segment at 38 to 89 (RNLPFHREREKVESNPNSSDEEDLTSTNNTRSSDNTTSDTEDDSGEDSYQVE) is disordered. Over residues 62–75 (TSTNNTRSSDNTTS) the composition is skewed to low complexity. 12 consecutive transmembrane segments (helical) span residues 108–128 (IYTLLVASFIAIVITANSSIF), 148–168 (LCSATFLLGFAAGSVLFAPLS), 174–194 (LPLYSVTLVIFVVFQIGGGCS), 197–217 (IWSLVIFRFFHGFFGCTPMSA), 233–253 (GALLVFCAAAFVGPLVGPVMG), 265–285 (WDFWINMIWAGLTWVIVCFTM), 346–366 (MYLVFINILLYICMVGYPLIF), 377–397 (GLAILGILVGILLGLALTPII), 418–438 (LFPLFFGSFFIPIALFWLGWT), 445–465 (WAAPMVSGIFLGWGFLYVLAV), 478–500 (AASALSVATFTRYAAGGGMTIVA), and 514–534 (SLLAFVGCGLVPIPFIFFFWG).

Belongs to the major facilitator superfamily. CAR1 family.

The protein localises to the membrane. This is an uncharacterized protein from Schizosaccharomyces pombe (strain 972 / ATCC 24843) (Fission yeast).